A 733-amino-acid chain; its full sequence is Serine/threonine-protein kinase ATG1c (733 aa).

Residues 12–269 (YLVGRQIGSG…FEEFFNHPFL (258 aa)) enclose the Protein kinase domain. Residues 18–26 (IGSGSFSVV) and Lys41 contribute to the ATP site. Catalysis depends on Asp134, which acts as the Proton acceptor. Disordered regions lie at residues 292–363 (SSGS…ELTS) and 379–414 (FETQ…SQDS). Over residues 329 to 339 (KKTSSMKSSSG) the composition is skewed to polar residues. 2 stretches are compositionally biased toward basic and acidic residues: residues 342 to 360 (VDTR…KHTE) and 379 to 393 (FETQ…RREP). The short motif at 419 to 422 (FVLV) is the AIM (Atg8-family-interacting motif) element. Disordered stretches follow at residues 565-596 (GSPS…SHDG) and 713-733 (HRRS…NRQS). A compositionally biased stretch (polar residues) spans 566-577 (SPSQDINKLRSS). The segment covering 579-596 (LKHDTHSSNKVTDLSHDG) has biased composition (basic and acidic residues). Polar residues predominate over residues 717 to 733 (SAGQMQGSSLAMMNRQS).

It belongs to the protein kinase superfamily. Ser/Thr protein kinase family.

It localises to the cytoplasmic vesicle. It is found in the autophagosome. Its function is as follows. Serine/threonine protein kinase involved in autophagy. The ATG1-ATG13 protein kinase complex regulates downstream events required for autophagosome enclosure and/or vacuolar delivery. The chain is Serine/threonine-protein kinase ATG1c from Arabidopsis thaliana (Mouse-ear cress).